The sequence spans 150 residues: Urease accessory protein UreE (150 aa).

Belongs to the UreE family.

Its subcellular location is the cytoplasm. Functionally, involved in urease metallocenter assembly. Binds nickel. Probably functions as a nickel donor during metallocenter assembly. The chain is Urease accessory protein UreE from Staphylococcus aureus (strain MRSA252).